Reading from the N-terminus, the 159-residue chain is Small ribosomal subunit protein uS9 (159 aa).

The protein belongs to the universal ribosomal protein uS9 family.

The chain is Small ribosomal subunit protein uS9 from Bradyrhizobium diazoefficiens (strain JCM 10833 / BCRC 13528 / IAM 13628 / NBRC 14792 / USDA 110).